Reading from the N-terminus, the 288-residue chain is Acetyl-coenzyme A carboxylase carboxyl transferase subunit beta (288 aa).

Residues L34–Q288 enclose the CoA carboxyltransferase N-terminal domain. 4 residues coordinate Zn(2+): C38, C41, C56, and C59. The C4-type zinc finger occupies C38–C59.

It belongs to the AccD/PCCB family. As to quaternary structure, acetyl-CoA carboxylase is a heterohexamer composed of biotin carboxyl carrier protein (AccB), biotin carboxylase (AccC) and two subunits each of ACCase subunit alpha (AccA) and ACCase subunit beta (AccD). The cofactor is Zn(2+).

The protein resides in the cytoplasm. The enzyme catalyses N(6)-carboxybiotinyl-L-lysyl-[protein] + acetyl-CoA = N(6)-biotinyl-L-lysyl-[protein] + malonyl-CoA. The protein operates within lipid metabolism; malonyl-CoA biosynthesis; malonyl-CoA from acetyl-CoA: step 1/1. Component of the acetyl coenzyme A carboxylase (ACC) complex. Biotin carboxylase (BC) catalyzes the carboxylation of biotin on its carrier protein (BCCP) and then the CO(2) group is transferred by the transcarboxylase to acetyl-CoA to form malonyl-CoA. This chain is Acetyl-coenzyme A carboxylase carboxyl transferase subunit beta, found in Streptococcus pyogenes serotype M1.